Here is an 82-residue protein sequence, read N- to C-terminus: Exodeoxyribonuclease 7 small subunit (82 aa).

Belongs to the XseB family. Heterooligomer composed of large and small subunits.

Its subcellular location is the cytoplasm. It carries out the reaction Exonucleolytic cleavage in either 5'- to 3'- or 3'- to 5'-direction to yield nucleoside 5'-phosphates.. Functionally, bidirectionally degrades single-stranded DNA into large acid-insoluble oligonucleotides, which are then degraded further into small acid-soluble oligonucleotides. The protein is Exodeoxyribonuclease 7 small subunit of Sodalis glossinidius (strain morsitans).